The sequence spans 348 residues: Dihydroorotase (348 aa).

Positions 17 and 19 each coordinate Zn(2+). Substrate is bound by residues 19 to 21 and asparagine 45; that span reads HLR. Residues lysine 103, histidine 140, and histidine 178 each coordinate Zn(2+). Lysine 103 carries the N6-carboxylysine modification. Histidine 140 provides a ligand contact to substrate. Residue leucine 223 participates in substrate binding. Aspartate 251 is a Zn(2+) binding site. Aspartate 251 is an active-site residue. Residues histidine 255 and alanine 267 each contribute to the substrate site.

This sequence belongs to the metallo-dependent hydrolases superfamily. DHOase family. Class II DHOase subfamily. Homodimer. Zn(2+) serves as cofactor.

The catalysed reaction is (S)-dihydroorotate + H2O = N-carbamoyl-L-aspartate + H(+). It functions in the pathway pyrimidine metabolism; UMP biosynthesis via de novo pathway; (S)-dihydroorotate from bicarbonate: step 3/3. Catalyzes the reversible cyclization of carbamoyl aspartate to dihydroorotate. The sequence is that of Dihydroorotase from Salmonella typhimurium (strain LT2 / SGSC1412 / ATCC 700720).